Reading from the N-terminus, the 338-residue chain is MIEADRLIHAEPQGPEERDEQIDRAMRPKLLDEYTGQDDTRAQLKIFIKAAQNRGEALDHMLIYGPPGLGKTTLAMIVANEMGVNIKSTSGPVLEKAGDLAALLTNLEPGDVLFIDEIHRLSSVVEEILYPAMEDYQLDIMIGEGPAARSIKLDLPPFTLIGATTRAGALTSPLRARFGIPLRLEFYNTKDLSSIVSRSANVLELPIDDEGAIELAKRSRGTPRIANRLLRRVRDFAEVKHDGEINKAVADLALDMLDIDSEGFDYMDRKLLLAIIDKFMGGPVGLDNLAAAIGEERETIEDVLEPFLIQQGFIQRTPRGRIATDRAYRHFDIIQPEK.

Positions 1–22 (MIEADRLIHAEPQGPEERDEQI) are disordered. The interval 4–187 (ADRLIHAEPQ…FGIPLRLEFY (184 aa)) is large ATPase domain (RuvB-L). ATP contacts are provided by residues arginine 27, glycine 68, lysine 71, threonine 72, threonine 73, 134-136 (EDY), arginine 177, tyrosine 187, and arginine 224. A Mg(2+)-binding site is contributed by threonine 72. The tract at residues 188–258 (NTKDLSSIVS…VADLALDMLD (71 aa)) is small ATPAse domain (RuvB-S). The head domain (RuvB-H) stretch occupies residues 261–338 (SEGFDYMDRK…RHFDIIQPEK (78 aa)). DNA is bound by residues arginine 297, arginine 316, and arginine 321.

This sequence belongs to the RuvB family. Homohexamer. Forms an RuvA(8)-RuvB(12)-Holliday junction (HJ) complex. HJ DNA is sandwiched between 2 RuvA tetramers; dsDNA enters through RuvA and exits via RuvB. An RuvB hexamer assembles on each DNA strand where it exits the tetramer. Each RuvB hexamer is contacted by two RuvA subunits (via domain III) on 2 adjacent RuvB subunits; this complex drives branch migration. In the full resolvosome a probable DNA-RuvA(4)-RuvB(12)-RuvC(2) complex forms which resolves the HJ.

The protein resides in the cytoplasm. It carries out the reaction ATP + H2O = ADP + phosphate + H(+). Its function is as follows. The RuvA-RuvB-RuvC complex processes Holliday junction (HJ) DNA during genetic recombination and DNA repair, while the RuvA-RuvB complex plays an important role in the rescue of blocked DNA replication forks via replication fork reversal (RFR). RuvA specifically binds to HJ cruciform DNA, conferring on it an open structure. The RuvB hexamer acts as an ATP-dependent pump, pulling dsDNA into and through the RuvAB complex. RuvB forms 2 homohexamers on either side of HJ DNA bound by 1 or 2 RuvA tetramers; 4 subunits per hexamer contact DNA at a time. Coordinated motions by a converter formed by DNA-disengaged RuvB subunits stimulates ATP hydrolysis and nucleotide exchange. Immobilization of the converter enables RuvB to convert the ATP-contained energy into a lever motion, pulling 2 nucleotides of DNA out of the RuvA tetramer per ATP hydrolyzed, thus driving DNA branch migration. The RuvB motors rotate together with the DNA substrate, which together with the progressing nucleotide cycle form the mechanistic basis for DNA recombination by continuous HJ branch migration. Branch migration allows RuvC to scan DNA until it finds its consensus sequence, where it cleaves and resolves cruciform DNA. This Shewanella sediminis (strain HAW-EB3) protein is Holliday junction branch migration complex subunit RuvB.